Here is a 257-residue protein sequence, read N- to C-terminus: MRILLTNDDGVHAGGLAALERIARTLSDDVWIVAPETDQSGLAHSLSLSEPLRLRKISDKHFALRGTPTDCVIMGIRQVMDIKPDLVLSGVNSGSNVADDVTYSGTIAGAIEGTMQGVRSFALSQAYLYEDGARIVPWEVCETHAPALLEKLMVLDLPDGTFLNLNFPNCRPDEVDGAEVTMQGKLAFNLQVDARSDGRGFPYYWLKFGERAGAFIEGTDIHALKHNKISVTPLKLDLTDYSVTDRVARALGYGAQV.

A divalent metal cation contacts are provided by aspartate 8, aspartate 9, serine 40, and asparagine 92.

This sequence belongs to the SurE nucleotidase family. It depends on a divalent metal cation as a cofactor.

Its subcellular location is the cytoplasm. It carries out the reaction a ribonucleoside 5'-phosphate + H2O = a ribonucleoside + phosphate. Functionally, nucleotidase that shows phosphatase activity on nucleoside 5'-monophosphates. The polypeptide is 5'-nucleotidase SurE (Rhizobium etli (strain ATCC 51251 / DSM 11541 / JCM 21823 / NBRC 15573 / CFN 42)).